We begin with the raw amino-acid sequence, 442 residues long: Septin-8 (442 aa).

At A2 the chain carries N-acetylalanine. Position 10 is a phosphoserine (S10). In terms of domain architecture, Septin-type G spans 41-307 (QGFSFNILCV…ELYRRCKLEE (267 aa)). The G1 motif stretch occupies residues 51–58 (GETGIGKS). GTP contacts are provided by residues 51–58 (GETGIGKS), G106, 187–195 (KADTISKSE), G241, and R256. Residues 103 to 106 (DAVG) are G3 motif. The tract at residues 186-189 (AKAD) is G4 motif. A coiled-coil region spans residues 322 to 410 (LQETYEAKRK…RKAAVEALQS (89 aa)). A compositionally biased stretch (basic and acidic residues) spans 377 to 391 (HQEEKRKVEEKRREL). Residues 377-442 (HQEEKRKVEE…WSSIYSVTIP (66 aa)) are disordered. 2 stretches are compositionally biased toward polar residues: residues 408–420 (LQSQALHATSQQP) and 432–442 (GWSSIYSVTIP).

The protein belongs to the TRAFAC class TrmE-Era-EngA-EngB-Septin-like GTPase superfamily. Septin GTPase family. Septins polymerize into heterooligomeric protein complexes that form filaments, and can associate with cellular membranes, actin filaments and microtubules. GTPase activity is required for filament formation. Interacts with CDK14, SEPTIN4, SEPTIN5 and SEPTIN7. Interacts with VAMP2; the interaction inhibits interaction of VAMP2 with SYP. Interacts with STX1A.

It localises to the cytoplasm. It is found in the cytoskeleton. The protein localises to the synapse. The protein resides in the cell projection. Its subcellular location is the axon. It localises to the cytoplasmic vesicle. It is found in the secretory vesicle. The protein localises to the synaptic vesicle membrane. The protein resides in the presynapse. In terms of biological role, filament-forming cytoskeletal GTPase. May play a role in platelet secretion. Seems to participate in the process of SNARE complex formation in synaptic vesicles. In Callithrix jacchus (White-tufted-ear marmoset), this protein is Septin-8.